Here is a 113-residue protein sequence, read N- to C-terminus: Dynein light chain Tctex-type 1 (113 aa).

Residue Met1 is modified to N-acetylmethionine. An interaction with GNB1 region spans residues 41 to 113 (QWTTNVLEQT…CIVSTFGLSI (73 aa)).

It belongs to the dynein light chain Tctex-type family. Homodimer. The cytoplasmic dynein 1 complex consists of two catalytic heavy chains (HCs) and a number of non-catalytic subunits presented by intermediate chains (ICs), light intermediate chains (LICs) and light chains (LCs); the composition seems to vary in respect to the IC, LIC and LC composition. The heavy chain homodimer serves as a scaffold for the probable homodimeric assembly of the respective non-catalytic subunits. The ICs and LICs bind directly to the HC dimer and the LCs assemble on the IC dimer. DYNLT1 and DYNLT3 compete for association with dynein IC (DYNC1I1 or DYNC1I2). Self-associates. Interacts with RHO. Interacts with DYNC1I1 and DYNC1I2. Interacts with DOC2A, DOC2B and SCN10A. Interacts with PVR. Interacts with SVIL isoform 2. Interacts with GNB1; the interaction occurs in presence of guanine nucleotide-binding protein G(T) subunit gamma; the interaction diminishes the association of DYNLT1 with dynein IC (DYNC1I1 or DYNC1I2). Interacts with GNB2, GNB3 and GNB5; the interactions occur in presence of guanine nucleotide-binding protein G(T) subunit gamma. Interacts with ACVR2B and ARHGEF2. Interacts with DNAI4. Interacts with CFAP61. Post-translationally, phosphorylated by BMPR2. The phosphorylation status is proposed to regulate the association with the cytoplasmic dynein complex and may have role in cytoplasmic dynein cargo release. In terms of tissue distribution, high level in testis (germ cell-specific). Expressed in sperm (at protein level). 200-fold lower in liver, brain, heart, spleen, and kidney. Levels in thymus and two embryonal carcinoma cell lines were several-fold higher than this low constitutive level.

It is found in the golgi apparatus. The protein localises to the cytoplasm. Its subcellular location is the cytoskeleton. The protein resides in the spindle. Functionally, acts as one of several non-catalytic accessory components of the cytoplasmic dynein 1 complex that are thought to be involved in linking dynein to cargos and to adapter proteins that regulate dynein function. Cytoplasmic dynein 1 acts as a motor for the intracellular retrograde motility of vesicles and organelles along microtubules. Binds to transport cargos and is involved in apical cargo transport such as rhodopsin-bearing vesicles in polarized epithelia. May also be a accessory component of axonemal dynein. Plays an important role in male germ cell development and function. Candidate for involvement in male sterility. Its function is as follows. Plays a role in neuronal morphogenesis; the function is independent of cytoplasmic dynein and seems to be coupled to regulation of the actin cytoskeleton by enhancing Rac1 activity. The function in neurogenesis may be regulated by association with a G-protein beta-gamma dimer. May function as a receptor-independent activator of heterotrimeric G-protein signaling; the activation appears to be independent of a nucleotide exchange. Plays a role in regulating neurogenesis; inhibits the genesis of neurons from precursor cells during cortical development presumably by antagonizing ARHGEF2. Unrelated to the role in retrograde microtubule-associated movement may play a role in the dimerization of cytoplasmic proteins/domains such as for ACVR2B. Binds to the cytoplasmic domain of ACVR2B and, in vitro, inhibits ACVR2B signaling. Involved in the regulation of mitotic spindle orientation. This Mus musculus (Mouse) protein is Dynein light chain Tctex-type 1 (Dynlt1).